Consider the following 223-residue polypeptide: Deoxyribose-phosphate aldolase (223 aa).

The active-site Proton donor/acceptor is the aspartate 91. Lysine 153 acts as the Schiff-base intermediate with acetaldehyde in catalysis. Lysine 182 serves as the catalytic Proton donor/acceptor.

It belongs to the DeoC/FbaB aldolase family. DeoC type 1 subfamily.

The protein resides in the cytoplasm. It carries out the reaction 2-deoxy-D-ribose 5-phosphate = D-glyceraldehyde 3-phosphate + acetaldehyde. Its pathway is carbohydrate degradation; 2-deoxy-D-ribose 1-phosphate degradation; D-glyceraldehyde 3-phosphate and acetaldehyde from 2-deoxy-alpha-D-ribose 1-phosphate: step 2/2. Functionally, catalyzes a reversible aldol reaction between acetaldehyde and D-glyceraldehyde 3-phosphate to generate 2-deoxy-D-ribose 5-phosphate. This is Deoxyribose-phosphate aldolase from Streptococcus pyogenes serotype M3 (strain ATCC BAA-595 / MGAS315).